The primary structure comprises 553 residues: Membrane protein insertase YidC (553 aa).

5 consecutive transmembrane segments (helical) span residues 7–24 (VLWV…DNWQ), 365–385 (WGWA…PLSA), 435–455 (LPVV…LASV), 474–494 (PFFI…SLNP), and 509–529 (PIAF…YYVV).

This sequence belongs to the OXA1/ALB3/YidC family. Type 1 subfamily. Interacts with the Sec translocase complex via SecD. Specifically interacts with transmembrane segments of nascent integral membrane proteins during membrane integration.

Its subcellular location is the cell inner membrane. Required for the insertion and/or proper folding and/or complex formation of integral membrane proteins into the membrane. Involved in integration of membrane proteins that insert both dependently and independently of the Sec translocase complex, as well as at least some lipoproteins. Aids folding of multispanning membrane proteins. This is Membrane protein insertase YidC from Burkholderia orbicola (strain MC0-3).